The primary structure comprises 205 residues: Methylthioribulose-1-phosphate dehydratase (205 aa).

Zn(2+)-binding residues include H96 and H98.

It belongs to the aldolase class II family. MtnB subfamily. Requires Zn(2+) as cofactor.

The enzyme catalyses 5-(methylsulfanyl)-D-ribulose 1-phosphate = 5-methylsulfanyl-2,3-dioxopentyl phosphate + H2O. Its pathway is amino-acid biosynthesis; L-methionine biosynthesis via salvage pathway; L-methionine from S-methyl-5-thio-alpha-D-ribose 1-phosphate: step 2/6. In terms of biological role, catalyzes the dehydration of methylthioribulose-1-phosphate (MTRu-1-P) into 2,3-diketo-5-methylthiopentyl-1-phosphate (DK-MTP-1-P). In Pseudomonas paraeruginosa (strain DSM 24068 / PA7) (Pseudomonas aeruginosa (strain PA7)), this protein is Methylthioribulose-1-phosphate dehydratase.